Here is a 380-residue protein sequence, read N- to C-terminus: Transcription factor SOX-7 (380 aa).

Positions 24 to 43 (SDGLSPPAVPRPSGDKSSES) are disordered. Residues 45–113 (IRRPMNAFMV…QHMQDYPNYK (69 aa)) constitute a DNA-binding region (HMG box). Residues 139-167 (SRDQNTLPEKNGIGRGEKEDRGEYSPGAT) are disordered. Residues 260–380 (VSMMSSVSGC…ATYYNSYSVS (121 aa)) enclose the Sox C-terminal domain. Residues 323–328 (EFDQYL) are required for beta-catenin-binding.

As to quaternary structure, interacts with CTNNB1/beta-catenin; this interaction may lead to the proteasomal degradation of active CTNNB1 and thus inhibition of Wnt/beta-catenin-stimulated transcription. Predominantly expressed in ovary, lung and heart. In the ovary, restricted to oocytes (at protein level). Present both in mesenchymal and epithelial cells in some adult tissues, including ear.

Its subcellular location is the nucleus. It is found in the cytoplasm. Binds to and activates the CDH5 promoter, hence plays a role in the transcriptional regulation of genes expressed in the hemogenic endothelium and blocks further differentiation into blood precursors. May be required for the survival of both hematopoietic and endothelial precursors during specification. May play a role in skeletal myogenesis and up-regulate the expression of muscle markers, such as PAX3/PAX7 and Meox1. Competes with GATA4 for binding and activation of the FGF3 promoter. Represses Wnt/beta-catenin-stimulated transcription. Probably acts by targeting CTNNB1 to proteasomal degradation. Binds the DNA sequence 5'-AACAAT-3'. The chain is Transcription factor SOX-7 (Sox7) from Mus musculus (Mouse).